We begin with the raw amino-acid sequence, 486 residues long: Cardiolipin synthase A (486 aa).

A run of 2 helical transmembrane segments spans residues 3-23 (TFYT…IAGV) and 38-58 (MAWL…YLSF). 2 consecutive PLD phosphodiesterase domains span residues 219-246 (MDLR…VDPR) and 399-426 (EGGL…DMRS). Residues His-224, Lys-226, Asp-231, His-404, Lys-406, and Asp-411 contribute to the active site.

It belongs to the phospholipase D family. Cardiolipin synthase subfamily. ClsA sub-subfamily.

It localises to the cell inner membrane. The enzyme catalyses 2 a 1,2-diacyl-sn-glycero-3-phospho-(1'-sn-glycerol) = a cardiolipin + glycerol. Catalyzes the reversible phosphatidyl group transfer from one phosphatidylglycerol molecule to another to form cardiolipin (CL) (diphosphatidylglycerol) and glycerol. The polypeptide is Cardiolipin synthase A (Klebsiella pneumoniae subsp. pneumoniae (strain ATCC 700721 / MGH 78578)).